Reading from the N-terminus, the 82-residue chain is Penaeidin-3a (82 aa).

An N-terminal signal peptide occupies residues 1–19 (MRLVVCLVFLASFALVCQG). At glutamine 20 the chain carries Pyrrolidone carboxylic acid. Disulfide bonds link cysteine 51/cysteine 66, cysteine 55/cysteine 73, and cysteine 67/cysteine 74. Serine 81 is subject to Serine amide.

Post-translationally, the N-terminus forms pyrrolidone carboxylic acid. In terms of tissue distribution, higher expression in hemocytes and to a lesser extent in heart, testis, gills, intestine, lymphoid organ and hepatopancreas. Traces in eyes and subcuticular epithelium. Not present in the brain.

Its subcellular location is the cytoplasmic granule. Functionally, antibacterial activity against M.luteus and E.coli bacteria. Antifungal activity against N.crassa and F.oxysporum. Presents chitin-binding activity. In Penaeus vannamei (Whiteleg shrimp), this protein is Penaeidin-3a.